A 140-amino-acid chain; its full sequence is ATP synthase epsilon chain (140 aa).

This sequence belongs to the ATPase epsilon chain family. F-type ATPases have 2 components, CF(1) - the catalytic core - and CF(0) - the membrane proton channel. CF(1) has five subunits: alpha(3), beta(3), gamma(1), delta(1), epsilon(1). CF(0) has three main subunits: a, b and c.

The protein resides in the cell inner membrane. Its function is as follows. Produces ATP from ADP in the presence of a proton gradient across the membrane. The chain is ATP synthase epsilon chain from Bdellovibrio bacteriovorus (strain ATCC 15356 / DSM 50701 / NCIMB 9529 / HD100).